Reading from the N-terminus, the 71-residue chain is Cruzioseptin-2 (71 aa).

A signal peptide spans 1 to 22 (MAFLKKSLFLVLFLGLVSLSIC). Positions 23-43 (EEEKREEENEEVQEDDDQSEE) are excised as a propeptide. Residue Gln-68 is modified to Glutamine amide. A propeptide spanning residues 70–71 (EQ) is cleaved from the precursor.

In terms of tissue distribution, expressed by the skin glands.

The protein localises to the secreted. In terms of biological role, has antimicrobial activity against Gram-negative bacterium E.coli (MIC=26.35 uM), against Gram-positive bacterium S.aureus (MIC=6.59 uM) and against fungus C.albicans (MIC=13.18 uM). At higher concentrations also has a bactericidal and fungicidal effect. Has hemagglutinating activity against horse erythrocytes. The protein is Cruzioseptin-2 of Cruziohyla calcarifer (Splendid leaf frog).